The following is a 494-amino-acid chain: Alpha-amylase 1 (494 aa).

A signal peptide spans 1–18 (MFLAKSIVCLALLAVANA). Residues C46 and C102 are joined by a disulfide bond. Positions 116, 165, and 174 each coordinate Ca(2+). The cysteines at positions 153 and 167 are disulfide-linked. R202 is a chloride binding site. Catalysis depends on D204, which acts as the Nucleophile. Residue H208 coordinates Ca(2+). E241 functions as the Proton donor in the catalytic mechanism. Residues N304 and R343 each contribute to the chloride site. The segment at 350–370 (FTDTDQGPPTTDGQNIASPSF) is disordered. Low complexity predominate over residues 351-363 (TDTDQGPPTTDGQ). 2 cysteine pairs are disulfide-bonded: C376–C382 and C448–C460.

This sequence belongs to the glycosyl hydrolase 13 family. Monomer. Requires Ca(2+) as cofactor. Chloride serves as cofactor.

It catalyses the reaction Endohydrolysis of (1-&gt;4)-alpha-D-glucosidic linkages in polysaccharides containing three or more (1-&gt;4)-alpha-linked D-glucose units.. This is Alpha-amylase 1 (Amy35) from Drosophila ananassae (Fruit fly).